A 342-amino-acid chain; its full sequence is Anthranilate phosphoribosyltransferase (342 aa).

5-phospho-alpha-D-ribose 1-diphosphate is bound by residues glycine 81, 84–85, threonine 89, 91–94, 109–117, and alanine 121; these read GD, NVST, and KHGNRAASS. Glycine 81 contributes to the anthranilate binding site. Serine 93 provides a ligand contact to Mg(2+). Position 112 (asparagine 112) interacts with anthranilate. Arginine 167 serves as a coordination point for anthranilate. Mg(2+)-binding residues include aspartate 226 and glutamate 227.

Belongs to the anthranilate phosphoribosyltransferase family. In terms of assembly, homodimer. Mg(2+) serves as cofactor.

It catalyses the reaction N-(5-phospho-beta-D-ribosyl)anthranilate + diphosphate = 5-phospho-alpha-D-ribose 1-diphosphate + anthranilate. It functions in the pathway amino-acid biosynthesis; L-tryptophan biosynthesis; L-tryptophan from chorismate: step 2/5. Functionally, catalyzes the transfer of the phosphoribosyl group of 5-phosphorylribose-1-pyrophosphate (PRPP) to anthranilate to yield N-(5'-phosphoribosyl)-anthranilate (PRA). The sequence is that of Anthranilate phosphoribosyltransferase from Beijerinckia indica subsp. indica (strain ATCC 9039 / DSM 1715 / NCIMB 8712).